A 330-amino-acid polypeptide reads, in one-letter code: tRNA uridine(34) hydroxylase (330 aa).

The Rhodanese domain maps to Ser123–Ser217. Cys177 (cysteine persulfide intermediate) is an active-site residue. Residues Leu310–Ile330 are disordered. A compositionally biased stretch (basic and acidic residues) spans Gln317–Ile330.

Belongs to the TrhO family.

The catalysed reaction is uridine(34) in tRNA + AH2 + O2 = 5-hydroxyuridine(34) in tRNA + A + H2O. Functionally, catalyzes oxygen-dependent 5-hydroxyuridine (ho5U) modification at position 34 in tRNAs. In Francisella philomiragia subsp. philomiragia (strain ATCC 25017 / CCUG 19701 / FSC 153 / O#319-036), this protein is tRNA uridine(34) hydroxylase.